Consider the following 374-residue polypeptide: 8-amino-7-oxononanoate synthase (374 aa).

Substrate contacts are provided by Arg-22 and Arg-29. 109-110 (GY) serves as a coordination point for pyridoxal 5'-phosphate. His-134 contributes to the substrate binding site. Pyridoxal 5'-phosphate contacts are provided by residues Ser-182, 207-210 (DDAH), and 227-230 (TLSK). Position 230 is an N6-(pyridoxal phosphate)lysine (Lys-230). Residue Thr-339 participates in substrate binding.

This sequence belongs to the class-II pyridoxal-phosphate-dependent aminotransferase family. BioF subfamily. As to quaternary structure, homodimer. Pyridoxal 5'-phosphate serves as cofactor.

The catalysed reaction is 6-carboxyhexanoyl-[ACP] + L-alanine + H(+) = (8S)-8-amino-7-oxononanoate + holo-[ACP] + CO2. It participates in cofactor biosynthesis; biotin biosynthesis. In terms of biological role, catalyzes the decarboxylative condensation of pimeloyl-[acyl-carrier protein] and L-alanine to produce 8-amino-7-oxononanoate (AON), [acyl-carrier protein], and carbon dioxide. This chain is 8-amino-7-oxononanoate synthase, found in Methylobacterium radiotolerans (strain ATCC 27329 / DSM 1819 / JCM 2831 / NBRC 15690 / NCIMB 10815 / 0-1).